The chain runs to 180 residues: VDDTSTPVRAILADQGTHHAHLELLDNLHAAGWLAALSRPVPGSALADADQEAAMLLIRAHATGRPLLPETQPDPLETLLETDEARAAARTLLGPLAGNDSTSRTLRTTLRAWLAHHGSWDRTAADLGAHRNSVRYRISRIERDLGIDLSDPEQRMRMWFALSRFPDDTPTHPTQRDISR.

Belongs to the CdaR family.

This is an uncharacterized protein from Thermomonospora curvata.